Consider the following 376-residue polypeptide: Chaperone protein DnaJ (376 aa).

The region spanning 5-70 (DYYEVLGVKK…QKRAAYDQYG (66 aa)) is the J domain. The CR-type zinc finger occupies 131–209 (GVTKEIRIPT…CHGHGRVEKS (79 aa)). C144, C147, C161, C164, C183, C186, C197, and C200 together coordinate Zn(2+). 4 CXXCXGXG motif repeats span residues 144 to 151 (CDVCHGSG), 161 to 168 (CSTCRGAG), 183 to 190 (CPTCHGSG), and 197 to 204 (CNKCHGHG).

The protein belongs to the DnaJ family. As to quaternary structure, homodimer. Zn(2+) is required as a cofactor.

The protein localises to the cytoplasm. In terms of biological role, participates actively in the response to hyperosmotic and heat shock by preventing the aggregation of stress-denatured proteins and by disaggregating proteins, also in an autonomous, DnaK-independent fashion. Unfolded proteins bind initially to DnaJ; upon interaction with the DnaJ-bound protein, DnaK hydrolyzes its bound ATP, resulting in the formation of a stable complex. GrpE releases ADP from DnaK; ATP binding to DnaK triggers the release of the substrate protein, thus completing the reaction cycle. Several rounds of ATP-dependent interactions between DnaJ, DnaK and GrpE are required for fully efficient folding. Also involved, together with DnaK and GrpE, in the DNA replication of plasmids through activation of initiation proteins. The chain is Chaperone protein DnaJ from Yersinia enterocolitica serotype O:8 / biotype 1B (strain NCTC 13174 / 8081).